Reading from the N-terminus, the 163-residue chain is Nucleotide-binding protein ROP_16630 (163 aa).

The protein belongs to the YajQ family.

Nucleotide-binding protein. The sequence is that of Nucleotide-binding protein ROP_16630 from Rhodococcus opacus (strain B4).